Here is a 286-residue protein sequence, read N- to C-terminus: Protein HEAT-STRESS-ASSOCIATED 32 (286 aa).

This sequence belongs to the phosphosulfolactate synthase family.

In terms of biological role, transactivator required, together with HSP101, for long-term acquired thermotolerance (LAT) maintenance, probably by regulating heat-inducible genes expression, thus being a cellular component of thermomemory. The chain is Protein HEAT-STRESS-ASSOCIATED 32 from Arabidopsis thaliana (Mouse-ear cress).